We begin with the raw amino-acid sequence, 1121 residues long: Linoleate 10R-lipoxygenase (1121 aa).

The disordered stretch occupies residues 1–66 (MLRRFSSTFK…NEKKGNSVSP (66 aa)). Low complexity predominate over residues 22-36 (TASSSSAAVANTNNN). The span at 50–61 (SSSDDDRNEKKG) shows a compositional bias: basic and acidic residues. The active-site Proton acceptor is the histidine 253. Ca(2+) contacts are provided by aspartate 254, serine 269, tyrosine 271, aspartate 273, and serine 275.

The protein belongs to the peroxidase family.

It catalyses the reaction (9Z,12Z)-octadecadienoate + O2 = (8E,10R,12Z)-10-hydroperoxyoctadeca-8,12-dienoate. Its function is as follows. Responsible for the synthesis of various fatty acid-derived oxylipins. Oxidizes linoleic acid primarily to 10R-hydroperoxy-8,12-octadecadienoic acid (10R-HPODE) and, to a lesser extent, 8R-hydroperoxylinoleic acid (8R-HPODE). Also synthesizes 10-hydroxy-octadeca-8,12-dienoic acid (10-HODE) from linoleic acid and primarily 8R-hydroxy-octadeca-9-monoenoic acid (8-HOME, also known as psiB beta) from oleic acid. 8-HOME forms part of psi factor, a mixture of oxylipins that regulates the balance between sexual and asexual spore production. Displays epoxyalcohol synthase activity. Plays a role in the synthesis of prostaglandins which may be required for pathogenicity. The polypeptide is Linoleate 10R-lipoxygenase (Aspergillus fumigatus (strain ATCC MYA-4609 / CBS 101355 / FGSC A1100 / Af293) (Neosartorya fumigata)).